We begin with the raw amino-acid sequence, 379 residues long: Chaperone protein DnaJ (379 aa).

A J domain is found at 5–69; it reads DYYEVLGISK…NKRASYDQFG (65 aa). The CR-type zinc-finger motif lies at 136 to 218; that stretch reads GTTKEISIRK…CHGKGTENKT (83 aa). 8 residues coordinate Zn(2+): C149, C152, C166, C169, C192, C195, C206, and C209. CXXCXGXG motif repeat units follow at residues 149–156, 166–173, 192–199, and 206–213; these read CETCHGDG, CSYCNGAG, CPKCNGSG, and CPTCHGKG.

The protein belongs to the DnaJ family. Homodimer. Requires Zn(2+) as cofactor.

It localises to the cytoplasm. Functionally, participates actively in the response to hyperosmotic and heat shock by preventing the aggregation of stress-denatured proteins and by disaggregating proteins, also in an autonomous, DnaK-independent fashion. Unfolded proteins bind initially to DnaJ; upon interaction with the DnaJ-bound protein, DnaK hydrolyzes its bound ATP, resulting in the formation of a stable complex. GrpE releases ADP from DnaK; ATP binding to DnaK triggers the release of the substrate protein, thus completing the reaction cycle. Several rounds of ATP-dependent interactions between DnaJ, DnaK and GrpE are required for fully efficient folding. Also involved, together with DnaK and GrpE, in the DNA replication of plasmids through activation of initiation proteins. The polypeptide is Chaperone protein DnaJ (Staphylococcus aureus (strain bovine RF122 / ET3-1)).